Consider the following 334-residue polypeptide: ADP-L-glycero-D-manno-heptose-6-epimerase (334 aa).

Residues 11 to 12, 32 to 33, Lys-39, Lys-54, 77 to 81, and Asn-94 contribute to the NADP(+) site; these read FI, DN, and QGACS. The Proton acceptor role is filled by Tyr-141. Position 145 (Lys-145) interacts with NADP(+). Substrate is bound at residue Asn-171. Residues Val-172 and Lys-180 each coordinate NADP(+). Lys-180 serves as the catalytic Proton acceptor. Substrate contacts are provided by residues Arg-182, His-189, 203 to 206, Arg-216, and Tyr-295; that span reads FGSN.

Belongs to the NAD(P)-dependent epimerase/dehydratase family. HldD subfamily. Homopentamer. NADP(+) is required as a cofactor.

The enzyme catalyses ADP-D-glycero-beta-D-manno-heptose = ADP-L-glycero-beta-D-manno-heptose. The protein operates within nucleotide-sugar biosynthesis; ADP-L-glycero-beta-D-manno-heptose biosynthesis; ADP-L-glycero-beta-D-manno-heptose from D-glycero-beta-D-manno-heptose 7-phosphate: step 4/4. It functions in the pathway bacterial outer membrane biogenesis; LOS core biosynthesis. Its function is as follows. Catalyzes the interconversion between ADP-D-glycero-beta-D-manno-heptose and ADP-L-glycero-beta-D-manno-heptose via an epimerization at carbon 6 of the heptose. The sequence is that of ADP-L-glycero-D-manno-heptose-6-epimerase from Neisseria gonorrhoeae.